The following is a 335-amino-acid chain: Mesoderm-specific transcript protein (335 aa).

Helical transmembrane passes span 13–33 and 63–83; these read WWVQ…HIPP and VGVV…TSSY. The 240-residue stretch at 71 to 310 folds into the AB hydrolase-1 domain; that stretch reads IVVLLHGFPT…PRSTVSILDD (240 aa). The short motif at 98–103 is the RVIALD element; that stretch reads RVIALD. N-linked (GlcNAc...) asparagine glycosylation occurs at Asn-163. Residues 266-286 traverse the membrane as a helical segment; the sequence is VGALASVSIPIHFIYGPLDPI.

The protein belongs to the AB hydrolase superfamily. In terms of tissue distribution, expressed in mesodermal tissues. Isoform 1 is exclusively expressed from the paternal allele in all fetal tissues and cell lines examined, whereas isoform 2 is preferentially expressed from the paternal allele in a tissue-type-specific manner.

It is found in the endoplasmic reticulum membrane. The chain is Mesoderm-specific transcript protein (Mest) from Mus musculus (Mouse).